A 588-amino-acid polypeptide reads, in one-letter code: ustiloxin B cluster transcription factor ustR (588 aa).

Positions 11 to 38 (CWTCRLRRKKCNEDGQPCSNCEARGVFC) form a DNA-binding region, zn(2)-C6 fungal-type. The disordered stretch occupies residues 68–92 (RTRRARATPTNSINGEPRRPSIDMN).

The protein resides in the nucleus. Transcription factor that regulates the expression of the gene cluster that mediates the biosynthesis of ustiloxin B, an antimitotic tetrapeptide. The polypeptide is ustiloxin B cluster transcription factor ustR (Aspergillus flavus (strain ATCC 200026 / FGSC A1120 / IAM 13836 / NRRL 3357 / JCM 12722 / SRRC 167)).